Consider the following 65-residue polypeptide: Small, acid-soluble spore protein C3 (65 aa).

Belongs to the alpha/beta-type SASP family.

In terms of biological role, SASP are bound to spore DNA. They are double-stranded DNA-binding proteins that cause DNA to change to an a-like conformation. They protect the DNA backbone from chemical and enzymatic cleavage and are thus involved in dormant spore's high resistance to UV light. The sequence is that of Small, acid-soluble spore protein C3 (SASP-C3) from Priestia megaterium (Bacillus megaterium).